The chain runs to 717 residues: Choline transporter-like protein 5 (717 aa).

Residues 1 to 24 (MNDTEKPADTASEEEDFGDPRTYD) are disordered. The Cytoplasmic portion of the chain corresponds to 1 to 38 (MNDTEKPADTASEEEDFGDPRTYDPDFKGPVSNRSCTD). The helical transmembrane segment at 39-59 (VLCCMIFLLCIVGYIVLGLVA) threads the bilayer. At 60-242 (WVHGDPRRAA…KVFEDYATTW (183 aa)) the chain is on the extracellular side. Asparagine 88 and asparagine 190 each carry an N-linked (GlcNAc...) asparagine glycan. Residues 243–263 (YWILIGLMIAMVLSWIFLILL) traverse the membrane as a helical segment. Topologically, residues 264-265 (RF) are cytoplasmic. The helical transmembrane segment at 266–286 (IAGCLFWVFMIGVIGIIGYGI) threads the bilayer. The Extracellular portion of the chain corresponds to 287–325 (WHCYQQYTNLQEHPRSVLTVYDIGIQTNISMYFELQQTW). Asparagine 314 carries N-linked (GlcNAc...) asparagine glycosylation. The helical transmembrane segment at 326 to 346 (FTLMIILCIIEVIVILMLIFL) threads the bilayer. The Cytoplasmic portion of the chain corresponds to 347 to 351 (RNRIR). The chain crosses the membrane as a helical span at residues 352–372 (VAIILLKEGSKAIGYVPSTLV). Over 373 to 374 (YP) the chain is Extracellular. The chain crosses the membrane as a helical span at residues 375-395 (ALTFILLSICICYWVVTAVFL). The Cytoplasmic segment spans residues 396–460 (ATSGVPVYKV…QYIPTFHVYN (65 aa)). A helical transmembrane segment spans residues 461-481 (LFVFLWLINFVIALGQCALAG). Topologically, residues 482 to 515 (AFATYYWAMKKPDDIPRYPLFTAFGRAIRYHTGS) are extracellular. Residues 516–536 (LAFGSLIIALIQMFKIVLEYL) form a helical membrane-spanning segment. Residues 537 to 610 (NHRLKRTENT…KVAVTDEVTY (74 aa)) lie on the Cytoplasmic side of the membrane. The helical transmembrane segment at 611–631 (FVLFLGKILVAGSIGVLAFLF) threads the bilayer. Residues 632 to 649 (FTQRLPVIAQGPASLNYY) lie on the Extracellular side of the membrane. A helical transmembrane segment spans residues 650–670 (WVPLLTVILGSYLIAHGFFSV). The Cytoplasmic portion of the chain corresponds to 671–717 (YAMCVETIFICFLEDLERNDGSTARPYYVSQPLLKIFQEENLQTKQQ).

The protein belongs to the CTL (choline transporter-like) family.

The protein localises to the cell membrane. It carries out the reaction choline(out) + n H(+)(in) = choline(in) + n H(+)(out). In terms of biological role, choline/H+ antiporter. This Macaca fascicularis (Crab-eating macaque) protein is Choline transporter-like protein 5 (SLC44A5).